A 264-amino-acid chain; its full sequence is Protein FAM228B (264 aa).

The protein belongs to the FAM228 family.

This chain is Protein FAM228B (FAM228B), found in Bos taurus (Bovine).